A 449-amino-acid chain; its full sequence is Trigger factor (449 aa).

Positions 172–257 (GDRVTVDFVG…LKQVEWAHLP (86 aa)) constitute a PPIase FKBP-type domain.

The protein belongs to the FKBP-type PPIase family. Tig subfamily.

It localises to the cytoplasm. It catalyses the reaction [protein]-peptidylproline (omega=180) = [protein]-peptidylproline (omega=0). In terms of biological role, involved in protein export. Acts as a chaperone by maintaining the newly synthesized protein in an open conformation. Functions as a peptidyl-prolyl cis-trans isomerase. This chain is Trigger factor, found in Ralstonia nicotianae (strain ATCC BAA-1114 / GMI1000) (Ralstonia solanacearum).